The sequence spans 241 residues: Zinc finger CCHC domain-containing protein 24 (241 aa).

Phosphoserine is present on residues Ser65 and Ser93. The CCHC-type zinc-finger motif lies at 132 to 149 (YLCHLCFNKGHYIKDCPQ).

This Mus musculus (Mouse) protein is Zinc finger CCHC domain-containing protein 24.